The following is a 186-amino-acid chain: DNA damage up-regulated protein (186 aa).

Residues 147–166 are disordered; that stretch reads ATENGEGCRPARDPASSPSS.

In terms of assembly, interacts with DNA damage response proteins ATR, H2AX, PCNA, RAD18 and RAD51C. Forms a complex with H2AX and RAD18 following DDUP phosphorylation. Post-translationally, phosphorylated in an ATR-dependent manner; phosphorylation is required for interaction with H2AX and RAD18 and for DDUP-mediated DNA damage repair.

It is found in the nucleus. The protein localises to the chromosome. Its function is as follows. Promotes DNA damage repair through both homologous recombination repair (HRR) and post-replication repair (PRR) mechanisms. Enhances the retention of DNA damage response protein RAD18 at sites of DNA damage. This allows for HRR via association of RAD18 with RAD51C and for PRR via RAD18-mediated promotion of PCNA monoubiquitination. The protein is DNA damage up-regulated protein of Homo sapiens (Human).